A 399-amino-acid polypeptide reads, in one-letter code: L-asparaginase-like protein GE13669 (399 aa).

The first 22 residues, M1–S22, serve as a signal peptide directing secretion. Cystine bridges form between C90–C95, C189–C205, and C344–C371.

It belongs to the Ntn-hydrolase family.

This chain is L-asparaginase-like protein GE13669, found in Drosophila yakuba (Fruit fly).